The sequence spans 173 residues: Archaemetzincin (173 aa).

Position 130 (histidine 130) interacts with Zn(2+). Residue glutamate 131 is the Proton acceptor of the active site. Residues histidine 134, histidine 140, cysteine 141, cysteine 146, cysteine 165, and cysteine 168 each contribute to the Zn(2+) site.

The protein belongs to the peptidase M54 family. Monomer. Zn(2+) serves as cofactor.

Probable zinc metalloprotease whose natural substrate is unknown. The chain is Archaemetzincin from Natronomonas pharaonis (strain ATCC 35678 / DSM 2160 / CIP 103997 / JCM 8858 / NBRC 14720 / NCIMB 2260 / Gabara) (Halobacterium pharaonis).